A 314-amino-acid chain; its full sequence is Dihydroorotate dehydrogenase (fumarate) (314 aa).

FMN is bound by residues Ala-21 and 45–46; that span reads KS. Substrate-binding positions include Lys-45, 69 to 73, and Asn-129; that span reads NSMGL. Asn-129 provides a ligand contact to FMN. The active-site Nucleophile is Cys-132. Substrate is bound at residue Asn-134. 2 residues coordinate FMN: Lys-166 and Val-195. Substrate is bound at residue 196-197; it reads NS. FMN-binding positions include Gly-224, 251–252, and 273–274; these read GG and GT.

This sequence belongs to the dihydroorotate dehydrogenase family. Type 1 subfamily. In terms of assembly, homodimer. FMN is required as a cofactor.

It is found in the cytoplasm. The catalysed reaction is (S)-dihydroorotate + fumarate = orotate + succinate. It participates in pyrimidine metabolism; UMP biosynthesis via de novo pathway. Functionally, catalyzes the conversion of dihydroorotate to orotate with fumarate as the electron acceptor. Molecular oxygen can replace fumarate in vitro. The sequence is that of Dihydroorotate dehydrogenase (fumarate) (pyr4) from Trypanosoma cruzi (strain CL Brener).